The chain runs to 220 residues: MPLSHTTWAPAVKAKLNPEYLKQVAQFIQSTYREDAHIFPQQKNIFAALEKTPLPETKVVIMGQDPYHNIGQAQGLSFSVPENVPAPPSLQNILKELSTDVGPRQSHDLTSWSTQGVLLLNAVLTVPEGQANAHQGKIWEPLTDSLIQIASEDDAPKVFILWGKFAQSKRQFIDESKHLVLMSAHPSPLSAYRGFFGSQPFSKANHFLVAKGRQPIDWLK.

Asp65 functions as the Proton acceptor in the catalytic mechanism.

The protein belongs to the uracil-DNA glycosylase (UDG) superfamily. UNG family.

The protein localises to the cytoplasm. The catalysed reaction is Hydrolyzes single-stranded DNA or mismatched double-stranded DNA and polynucleotides, releasing free uracil.. Excises uracil residues from the DNA which can arise as a result of misincorporation of dUMP residues by DNA polymerase or due to deamination of cytosine. The chain is Uracil-DNA glycosylase from Leuconostoc mesenteroides subsp. mesenteroides (strain ATCC 8293 / DSM 20343 / BCRC 11652 / CCM 1803 / JCM 6124 / NCDO 523 / NBRC 100496 / NCIMB 8023 / NCTC 12954 / NRRL B-1118 / 37Y).